The following is a 357-amino-acid chain: Protein BIG GRAIN 1-like A (357 aa).

Disordered stretches follow at residues 1–146 and 208–233; these read MEIT…KELG and SSTCSSASSFSRSCLSKTPSSSGKSK. Positions 75 to 87 are enriched in basic and acidic residues; sequence DFERSRRKTDFLR. 2 stretches are compositionally biased toward low complexity: residues 88-104 and 112-127; these read HSNSSSSDSSGFSSSES and KSSASPPSSSRQQPKP. Polar residues predominate over residues 129–139; it reads RTSSVDHSSAV. The segment covering 208-223 has biased composition (low complexity); the sequence is SSTCSSASSFSRSCLS.

Belongs to the BIG GRAIN 1 (BG1) plant protein family.

Its subcellular location is the cell membrane. In terms of biological role, involved in auxin transport. Regulator of the auxin signaling pathway. This is Protein BIG GRAIN 1-like A from Arabidopsis thaliana (Mouse-ear cress).